The following is a 165-amino-acid chain: Ribosomal RNA large subunit methyltransferase H (165 aa).

Gly-109 is an S-adenosyl-L-methionine binding site.

This sequence belongs to the RNA methyltransferase RlmH family. As to quaternary structure, homodimer.

It localises to the cytoplasm. The enzyme catalyses pseudouridine(1915) in 23S rRNA + S-adenosyl-L-methionine = N(3)-methylpseudouridine(1915) in 23S rRNA + S-adenosyl-L-homocysteine + H(+). Specifically methylates the pseudouridine at position 1915 (m3Psi1915) in 23S rRNA. The protein is Ribosomal RNA large subunit methyltransferase H of Methylorubrum extorquens (strain CM4 / NCIMB 13688) (Methylobacterium extorquens).